Here is a 160-residue protein sequence, read N- to C-terminus: Lipoprotein signal peptidase (160 aa).

Helical transmembrane passes span 13–33, 72–92, and 104–124; these read IYITTIIFILILDISSKHLII, WFLSTVSILTILVMTRIITKL, and SLIIAGATGNLIDRIFYGFVV. Active-site residues include D125 and D143. The helical transmembrane segment at 134–154 threads the bilayer; that stretch reads WHFATFNIADCSIFIGIIILM.

It belongs to the peptidase A8 family.

It is found in the cell inner membrane. The catalysed reaction is Release of signal peptides from bacterial membrane prolipoproteins. Hydrolyzes -Xaa-Yaa-Zaa-|-(S,diacylglyceryl)Cys-, in which Xaa is hydrophobic (preferably Leu), and Yaa (Ala or Ser) and Zaa (Gly or Ala) have small, neutral side chains.. It functions in the pathway protein modification; lipoprotein biosynthesis (signal peptide cleavage). Its function is as follows. This protein specifically catalyzes the removal of signal peptides from prolipoproteins. The protein is Lipoprotein signal peptidase of Buchnera aphidicola subsp. Acyrthosiphon pisum (strain Tuc7).